Consider the following 229-residue polypeptide: B-cell antigen receptor complex-associated protein beta chain (229 aa).

The first 28 residues, 1-28, serve as a signal peptide directing secretion; it reads MARLALSPVPSHWMVALLLLLSAEPVPA. Topologically, residues 29-159 are extracellular; that stretch reads ARSEDRYRNP…QLKQRNTLKD (131 aa). The Ig-like V-type domain maps to 38–138; it reads PKGSACSRIW…TSEVYQGCGT (101 aa). 2 disulfide bridges follow: Cys-43-Cys-126 and Cys-65-Cys-122. N-linked (GlcNAc...) asparagine glycosylation is found at Asn-73, Asn-101, Asn-127, and Asn-128. Residues 160–180 traverse the membrane as a helical segment; that stretch reads GIIMIQTLLIILFIIVPIFLL. The Cytoplasmic segment spans residues 181–229; sequence LDKDDSKAGMEEDHTYEGLDIDQTATYEDIVTLRTGEVKWSVGEHPGQE. One can recognise an ITAM domain in the interval 185–213; that stretch reads DSKAGMEEDHTYEGLDIDQTATYEDIVTL. Phosphotyrosine; by SRC-type Tyr-kinases is present on residues Tyr-196 and Tyr-207.

Heterodimer of alpha and beta chains; disulfide-linked. Part of the B-cell antigen receptor complex where the alpha/beta chain heterodimer is non-covalently associated with an antigen-specific membrane-bound surface immunoglobulin of two heavy chains and two light chains. Interacts with LYN. In terms of processing, phosphorylated on tyrosine upon B-cell activation by SRC-type Tyr-kinases such as BLK, LYN and SYK. In terms of tissue distribution, B-cells.

It localises to the cell membrane. Required in cooperation with CD79A for initiation of the signal transduction cascade activated by the B-cell antigen receptor complex (BCR) which leads to internalization of the complex, trafficking to late endosomes and antigen presentation. Enhances phosphorylation of CD79A, possibly by recruiting kinases which phosphorylate CD79A or by recruiting proteins which bind to CD79A and protect it from dephosphorylation. This chain is B-cell antigen receptor complex-associated protein beta chain (CD79B), found in Homo sapiens (Human).